A 243-amino-acid chain; its full sequence is 7-cyano-7-deazaguanine synthase (243 aa).

14–24 (FSGGQDSATCL) lines the ATP pocket. Cys202, Cys217, Cys220, and Cys223 together coordinate Zn(2+).

This sequence belongs to the QueC family. Zn(2+) serves as cofactor.

The catalysed reaction is 7-carboxy-7-deazaguanine + NH4(+) + ATP = 7-cyano-7-deazaguanine + ADP + phosphate + H2O + H(+). The protein operates within purine metabolism; 7-cyano-7-deazaguanine biosynthesis. Catalyzes the ATP-dependent conversion of 7-carboxy-7-deazaguanine (CDG) to 7-cyano-7-deazaguanine (preQ(0)). In Paraburkholderia phymatum (strain DSM 17167 / CIP 108236 / LMG 21445 / STM815) (Burkholderia phymatum), this protein is 7-cyano-7-deazaguanine synthase.